The sequence spans 229 residues: E3 ubiquitin ligase TRIM40 (229 aa).

Residues 14–57 (CPICQESLKEAVSTNCGHLFCRVCLTQHVEKASASGVFCCPLCR) form an RING-type zinc finger. Residues 66-107 (GTGYICPNHQKRVCRFCEESRLLLCVECLVSPEHMSHHELTI) form a B box-type zinc finger. Zn(2+) is bound by residues cysteine 71, histidine 74, cysteine 93, and histidine 99. A coiled-coil region spans residues 107–154 (IENALSHYKERLNRRSRKLRKDIAELQRLKAQQEKKLQALQQWLGQLE).

The protein belongs to the TRIM/RBCC family. As to quaternary structure, interacts with NEDD8.

It catalyses the reaction S-ubiquitinyl-[E2 ubiquitin-conjugating enzyme]-L-cysteine + [acceptor protein]-L-lysine = [E2 ubiquitin-conjugating enzyme]-L-cysteine + N(6)-ubiquitinyl-[acceptor protein]-L-lysine.. E3 ubiquitin-protein ligase that plays a role in the limitation of the innate immune response. Mediates inhibition of the RLR signaling pathway by ubiquitinating RIGI and IFIH1 receptors, leading to their proteasomal degradation. Also promotes the neddylation of IKBKG/NEMO, stabilizing NFKBIA, and thereby inhibiting of NF-kappa-B nuclear translocation and activation. The sequence is that of E3 ubiquitin ligase TRIM40 (TRIM40) from Pan troglodytes (Chimpanzee).